A 302-amino-acid chain; its full sequence is MYYGFDVGGTKIEFGAFNEKLERVATERIPTQTEDYSLLVNDIASLIAKYDAEFGVEGKVGLGIPGMEDAETGALLTSNVPAAKGQFLRKDLEAKIGRSVKIDNDANCFALSEAWDEELKDSPSVLGLILGTGFGGGLVFDGKVFSGYSHVAGELGHSRLPIDAWFHLGEKAPLLECGCGNKGCIDNYLSGRGFELLYAHYYGQEKKAIDIIKANEAGDADAVEHVDRFMELLAICFANLFTCFDPHVVALGGGLSNFALIYDELPKRLPKHLLSVARVPRIIKAKHGDSGGVRGAAFLNIK.

ATP contacts are provided by residues G4–K11 and G133–F140. H157, C177, C179, and C184 together coordinate Zn(2+).

This sequence belongs to the ROK (NagC/XylR) family. NagK subfamily.

It catalyses the reaction N-acetyl-D-glucosamine + ATP = N-acetyl-D-glucosamine 6-phosphate + ADP + H(+). It participates in cell wall biogenesis; peptidoglycan recycling. In terms of biological role, catalyzes the phosphorylation of N-acetyl-D-glucosamine (GlcNAc) derived from cell-wall degradation, yielding GlcNAc-6-P. This chain is N-acetyl-D-glucosamine kinase, found in Aliivibrio salmonicida (strain LFI1238) (Vibrio salmonicida (strain LFI1238)).